We begin with the raw amino-acid sequence, 437 residues long: UDP-N-acetylmuramate--L-alanine ligase (437 aa).

108 to 114 contacts ATP; sequence GAHGKTS.

It belongs to the MurCDEF family.

It is found in the cytoplasm. The enzyme catalyses UDP-N-acetyl-alpha-D-muramate + L-alanine + ATP = UDP-N-acetyl-alpha-D-muramoyl-L-alanine + ADP + phosphate + H(+). Its pathway is cell wall biogenesis; peptidoglycan biosynthesis. Its function is as follows. Cell wall formation. The protein is UDP-N-acetylmuramate--L-alanine ligase of Lysinibacillus sphaericus (strain C3-41).